Reading from the N-terminus, the 367-residue chain is Glutamate 5-kinase (367 aa).

Lys-17 serves as a coordination point for ATP. Ser-57, Asp-144, and Asn-156 together coordinate substrate. ATP is bound by residues 176–177 (SD) and 217–223 (TGGMVSK). One can recognise a PUA domain in the interval 279–357 (VGSLTLDEGA…SELPCELRRP (79 aa)).

It belongs to the glutamate 5-kinase family.

Its subcellular location is the cytoplasm. The enzyme catalyses L-glutamate + ATP = L-glutamyl 5-phosphate + ADP. It functions in the pathway amino-acid biosynthesis; L-proline biosynthesis; L-glutamate 5-semialdehyde from L-glutamate: step 1/2. Catalyzes the transfer of a phosphate group to glutamate to form L-glutamate 5-phosphate. This is Glutamate 5-kinase from Mycobacterium leprae (strain Br4923).